A 385-amino-acid chain; its full sequence is MKLHEYQGKEILRQFGVNVQDGKVARTPDEVRQIAREYGQPVVVKAQVHVGGRGKAGGVKFSPTEDKAFENGEKILGMDIKGLTVNKVLVTKAVDIDAGTEYYVGMIVDRNVQSFTLMASAEGGMEIEEVAAATPEKIIKHRVDPVTGLRPYEAREVAIRAGFKGNLNKIADMMVKMSEAALKRDAVLVEINPLFVGPDGVPLALDTKFEIDDNAMYRHQDLADWRELEAEHPLEIEASKYGFAYVKLDGNVGVLGNGAGIVMTSLDVVNRAGAKPANFLDIGGGAKAEVVYNAVKLVSKDSDVKAIFINIFGGITRADEVAKGVIQALKDGILTKPVRMRIAGTAEDEAKALLAEVNSPLIQMYPTMFEAADEAAKEANAAEAK.

Residues 9 to 237 enclose the ATP-grasp domain; sequence KEILRQFGVN…LEAEHPLEIE (229 aa). ATP is bound by residues K45, 52–54, V94, and E101; that span reads GRG. The Mg(2+) site is built by N192 and D206. Residues N257 and 314 to 316 each bind substrate; that span reads GIT.

The protein belongs to the succinate/malate CoA ligase beta subunit family. As to quaternary structure, heterotetramer of two alpha and two beta subunits. The cofactor is Mg(2+).

It catalyses the reaction succinate + ATP + CoA = succinyl-CoA + ADP + phosphate. The catalysed reaction is GTP + succinate + CoA = succinyl-CoA + GDP + phosphate. Its pathway is carbohydrate metabolism; tricarboxylic acid cycle; succinate from succinyl-CoA (ligase route): step 1/1. In terms of biological role, succinyl-CoA synthetase functions in the citric acid cycle (TCA), coupling the hydrolysis of succinyl-CoA to the synthesis of either ATP or GTP and thus represents the only step of substrate-level phosphorylation in the TCA. The beta subunit provides nucleotide specificity of the enzyme and binds the substrate succinate, while the binding sites for coenzyme A and phosphate are found in the alpha subunit. The sequence is that of Succinate--CoA ligase [ADP-forming] subunit beta from Deinococcus deserti (strain DSM 17065 / CIP 109153 / LMG 22923 / VCD115).